Reading from the N-terminus, the 382-residue chain is Succinate--CoA ligase [ADP-forming] subunit beta (382 aa).

One can recognise an ATP-grasp domain in the interval 9–240 (KELFLRYGVK…PRDITEFEAY (232 aa)). ATP contacts are provided by residues K45, 52-54 (GRG), V94, and E99. Mg(2+) is bound by residues N193 and D207. Substrate contacts are provided by residues N260 and 317–319 (GIT).

It belongs to the succinate/malate CoA ligase beta subunit family. As to quaternary structure, heterotetramer of two alpha and two beta subunits. It depends on Mg(2+) as a cofactor.

It catalyses the reaction succinate + ATP + CoA = succinyl-CoA + ADP + phosphate. The enzyme catalyses GTP + succinate + CoA = succinyl-CoA + GDP + phosphate. Its pathway is carbohydrate metabolism; tricarboxylic acid cycle; succinate from succinyl-CoA (ligase route): step 1/1. In terms of biological role, succinyl-CoA synthetase functions in the citric acid cycle (TCA), coupling the hydrolysis of succinyl-CoA to the synthesis of either ATP or GTP and thus represents the only step of substrate-level phosphorylation in the TCA. The beta subunit provides nucleotide specificity of the enzyme and binds the substrate succinate, while the binding sites for coenzyme A and phosphate are found in the alpha subunit. The sequence is that of Succinate--CoA ligase [ADP-forming] subunit beta from Pyrobaculum islandicum (strain DSM 4184 / JCM 9189 / GEO3).